A 267-amino-acid chain; its full sequence is UPF0328 protein ECU06_0070 (267 aa).

This sequence belongs to the UPF0328 family.

The sequence is that of UPF0328 protein ECU06_0070 from Encephalitozoon cuniculi (strain GB-M1) (Microsporidian parasite).